The following is a 93-amino-acid chain: Acylphosphatase (93 aa).

One can recognise an Acylphosphatase-like domain in the interval 5-93 (TAILRVTGFV…EDRKTFDIVY (89 aa)). Active-site residues include R20 and N38.

It belongs to the acylphosphatase family.

It catalyses the reaction an acyl phosphate + H2O = a carboxylate + phosphate + H(+). This is Acylphosphatase (acyP) from Listeria welshimeri serovar 6b (strain ATCC 35897 / DSM 20650 / CCUG 15529 / CIP 8149 / NCTC 11857 / SLCC 5334 / V8).